Here is a 307-residue protein sequence, read N- to C-terminus: Predicted GPI-anchored protein 44 (307 aa).

A signal peptide spans 1–22 (MLSTNNLLILLIFSFLITNVKS). 2 N-linked (GlcNAc...) asparagine glycosylation sites follow: N146 and N217. The tract at residues 232–261 (TPQPLLETPSQESSAPNIDSTTPTTIDNTV) is disordered. Residues 239–254 (TPSQESSAPNIDSTTP) are compositionally biased toward polar residues. G286 carries the GPI-anchor amidated glycine lipid modification. A propeptide spans 287–307 (GAMGYPSISVALGLVFIAYLV) (removed in mature form).

The protein localises to the cell membrane. This chain is Predicted GPI-anchored protein 44 (PGA44), found in Candida albicans (strain SC5314 / ATCC MYA-2876) (Yeast).